The following is a 916-amino-acid chain: Protein translocase subunit SecA (916 aa).

ATP contacts are provided by residues Q87, 105-109 (GEGKT), and D507. Zn(2+)-binding residues include C900, C902, C911, and H912.

Belongs to the SecA family. As to quaternary structure, monomer and homodimer. Part of the essential Sec protein translocation apparatus which comprises SecA, SecYEG and auxiliary proteins SecDF-YajC and YidC. It depends on Zn(2+) as a cofactor.

The protein localises to the cell inner membrane. It localises to the cytoplasm. The catalysed reaction is ATP + H2O + cellular proteinSide 1 = ADP + phosphate + cellular proteinSide 2.. Functionally, part of the Sec protein translocase complex. Interacts with the SecYEG preprotein conducting channel. Has a central role in coupling the hydrolysis of ATP to the transfer of proteins into and across the cell membrane, serving both as a receptor for the preprotein-SecB complex and as an ATP-driven molecular motor driving the stepwise translocation of polypeptide chains across the membrane. This is Protein translocase subunit SecA from Neisseria gonorrhoeae (strain ATCC 700825 / FA 1090).